A 300-amino-acid polypeptide reads, in one-letter code: B1 kinase (300 aa).

The region spanning 16 to 282 (WVVGPLIGKG…ITMVNSLTYF (267 aa)) is the Protein kinase domain. ATP contacts are provided by residues 22 to 30 (IGKGGFGSI) and Lys45. The active-site Proton acceptor is the Asp147.

It belongs to the protein kinase superfamily. Ser/Thr protein kinase family. Poxviruses subfamily. As to quaternary structure, interacts with host JIP1; this interaction increases the amount of MAPK bound to JIP1 and subsequently increases the activity of transcription factors, such as JUN, that respond to these complexes. Interacts with protein OPG198; this interaction inhibits the repressive activity of OPG198 pseudokinase on viral replication factory formation. Mg(2+) is required as a cofactor. Post-translationally, autophosphorylated.

It is found in the virion. The protein resides in the host cytoplasm. The enzyme catalyses L-seryl-[protein] + ATP = O-phospho-L-seryl-[protein] + ADP + H(+). It carries out the reaction L-threonyl-[protein] + ATP = O-phospho-L-threonyl-[protein] + ADP + H(+). Essential serine/threonine-protein kinase that plays different role in the viral life cycle. Phosphorylates the host small ribosomal protein RACK1 thereby customizing the ribosomes to a state optimal for viral mRNAs (which contain poly-A leaders) but not for host mRNAs. Facilitates viral DNA replication by inhibiting host BANF1, a cellular host defense responsive to foreign DNA. Phosphorylates host BANF1 on serine and threonine residues; this leads to BANF1 relocalization to the cytoplasm, loss of dimerization and impaired DNA binding activity. Indeed, BANF1 activity depends on its DNA-binding property which is blocked by VPK1-mediated phosphorylation. Required for viral intermediate genes expression, probably by inhibiting host BANF1. Modulates cellular responses via host JUN by two different mechanisms, either by direct phosphorylation or by modulation of upstream JIP1-MAPK complexes. Seems to participate in the accumulation/processing of late proteins and thus in virion maturation. In addition, inhibits B12 repressive activity on viral DNA replication via a phosphorylation-dependent mechanism. The polypeptide is B1 kinase (OPG187) (Vaccinia virus (strain Ankara) (VACV)).